The primary structure comprises 451 residues: ATP synthase subunit beta (451 aa).

143-150 (GGAGVGKT) is an ATP binding site.

The protein belongs to the ATPase alpha/beta chains family. In terms of assembly, F-type ATPases have 2 components, CF(1) - the catalytic core - and CF(0) - the membrane proton channel. CF(1) has five subunits: alpha(3), beta(3), gamma(1), delta(1), epsilon(1). CF(0) has three main subunits: a(1), b(2) and c(9-12). The alpha and beta chains form an alternating ring which encloses part of the gamma chain. CF(1) is attached to CF(0) by a central stalk formed by the gamma and epsilon chains, while a peripheral stalk is formed by the delta and b chains.

It localises to the cell membrane. It catalyses the reaction ATP + H2O + 4 H(+)(in) = ADP + phosphate + 5 H(+)(out). In terms of biological role, produces ATP from ADP in the presence of a proton gradient across the membrane. The catalytic sites are hosted primarily by the beta subunits. The sequence is that of ATP synthase subunit beta from Coprothermobacter proteolyticus (strain ATCC 35245 / DSM 5265 / OCM 4 / BT).